A 212-amino-acid chain; its full sequence is MKIINAEFIKGAVKAEQFPEIGVSEFAFFGRSNAGKSSLINMLVNRKNLVKTGSRPGMTREVNFFLVNRPASLNFNPKTKKFSGPAPKDMFVLTDLPGYGYAKLSGGMTLQIDKMLYEYCTNRPLLKIIFFLMDMRREPTETEKESIGFFHGLNIEVVIVGTKADKIGKNDQIKAKNDWADFFNFDEELIIISSAAKKTGRDNILSLIAKRI.

Residues 22-212 (GVSEFAFFGR…NILSLIAKRI (191 aa)) enclose the EngB-type G domain. Residues 30 to 37 (GRSNAGKS), 57 to 61 (GMTRE), 95 to 98 (DLPG), 162 to 165 (TKAD), and 192 to 195 (ISSA) contribute to the GTP site. Residues Ser-37 and Thr-59 each coordinate Mg(2+).

Belongs to the TRAFAC class TrmE-Era-EngA-EngB-Septin-like GTPase superfamily. EngB GTPase family. Mg(2+) is required as a cofactor.

Functionally, necessary for normal cell division and for the maintenance of normal septation. The sequence is that of Probable GTP-binding protein EngB from Treponema denticola (strain ATCC 35405 / DSM 14222 / CIP 103919 / JCM 8153 / KCTC 15104).